Consider the following 648-residue polypeptide: RAF proto-oncogene serine/threonine-protein kinase (648 aa).

Residue serine 29 is modified to Phosphoserine; by MAPK1. Serine 43 is modified (phosphoserine; by PKA and MAPK1). An RBD domain is found at 56-131 (NTIRVFLPNK…IGEELQVDFL (76 aa)). The Phorbol-ester/DAG-type zinc finger occupies 138–184 (THNFARKTFLKLAFCDICQKFLLNGFRCQTCGYKFHEHCSTKVPTMC). The Zn(2+) site is built by histidine 139, cysteine 152, cysteine 155, cysteine 165, cysteine 168, histidine 173, cysteine 176, and cysteine 184. The disordered stretch occupies residues 220–334 (SVSRMPVSSQ…QEKNKIRPRG (115 aa)). A compositionally biased stretch (polar residues) spans 239-271 (TFNTSSPSSEGSLSQRQRSTSTPNVHMVSTTLP). Serine 252 bears the Phosphoserine mark. Phosphoserine; by PKA, PKC and PKB/AKT1 is present on serine 259. At threonine 268 the chain carries Phosphothreonine; by autocatalysis. Threonine 269 bears the Phosphothreonine; by PKA mark. The segment covering 275-285 (RMIEDAIRSHS) has biased composition (basic and acidic residues). Residues 286-301 (ESASPSALSSSPNNLS) show a composition bias toward low complexity. At serine 289 the chain carries Phosphoserine; by MAPK1. Serine 296 is modified (phosphoserine). Serine 301 bears the Phosphoserine; by MAPK1 mark. The interval 331 to 349 (RPRGQRDSSYYWEIEASEV) is interaction with PEBP1/RKIP. Serine 338 bears the Phosphoserine; by PAK1, PAK2, PAK3 and PAK5 mark. Serine 339 carries the phosphoserine; by PAK1, PAK2 and PAK3 modification. Phosphotyrosine; by SRC occurs at positions 340 and 341. Residues 349-609 (VMLSTRIGSG…PQILSSIELL (261 aa)) enclose the Protein kinase domain. Residues 355-363 (IGSGSFGTV) and lysine 375 contribute to the ATP site. Aspartate 468 acts as the Proton acceptor in catalysis. The residue at position 471 (serine 471) is a Phosphoserine. Threonine 491 bears the Phosphothreonine mark. Position 494 is a phosphoserine (serine 494). Serine 499 is modified (phosphoserine; by PKC). Arginine 563 bears the Symmetric dimethylarginine; by PRMT5 mark. Position 621 is a phosphoserine (serine 621). Serine 642 carries the phosphoserine; by MAPK1 modification.

It belongs to the protein kinase superfamily. TKL Ser/Thr protein kinase family. RAF subfamily. Monomer. Homodimer. Heterodimerizes with BRAF and this heterodimer possesses a highly increased kinase activity compared to the respective homodimers or monomers. Heterodimerization is mitogen-regulated and enhanced by 14-3-3 proteins. MAPK1/ERK2 activation can induce a negative feedback that promotes the dissociation of the heterodimer. Forms a multiprotein complex with Ras (M-Ras/MRAS), SHOC2 and protein phosphatase 1 (PPP1CA, PPP1CB and PPP1CC). Interacts with LZTR1. Interacts with Ras proteins; the interaction is antagonized by RIN1. Weakly interacts with RIT1. Interacts (via N-terminus) with RGS14 (via RBD domains); the interaction mediates the formation of a ternary complex with BRAF, a ternary complex inhibited by GNAI1. Probably forms a complex composed of chaperones HSP90 and HSP70, co-chaperones CDC37, PPP5C, TSC1 and client protein TSC2, CDK4, AKT, RAF1 and NR3C1; this complex does not contain co-chaperones STIP1/HOP and PTGES3/p23. Interacts with STK3/MST2; the interaction inhibits its pro-apoptotic activity. Interacts (when phosphorylated at Ser-259) with YWHAZ (unphosphorylated at 'Thr-232'). Interacts with MAP2K1/MEK1 and MAP2K2/MEK2. Interacts with MAP3K5/ASF1 (via N-terminus) and this interaction inhibits the proapoptotic function of MAP3K5/ASK1. Interacts with PAK1 (via kinase domain). The phosphorylated form interacts with PIN1. The Ser-338 and Ser-339 phosphorylated form (by PAK1) interacts with BCL2. Interacts with PEBP1/RKIP and this interaction is enhanced if RAF1 is phosphorylated on residues Ser-338, Ser-339, Tyr-340 and Tyr-341. Interacts with ADCY2, ADCY5, ADCY6, DGKH, RCAN1/DSCR1, PPP1R12A, PKB/AKT1, PPP2CA, PPP2R1B, SPRY2, SPRY4, CNKSR1/CNK1, KSR2 and PHB/prohibitin. Interacts with ROCK2. In its active form, interacts with PRMT5. Interacts with FAM83B; displaces 14-3-3 proteins from RAF1 and activates RAF1. Interacts with PDE8A; the interaction promotes RAF1 activity. Interacts with MFHAS1. Interacts with GLS. Interacts with NEK10 and MAP2K1; the interaction is direct with NEK10 and required for ERK1/2-signaling pathway activation in response to UV irradiation. It depends on Zn(2+) as a cofactor. In terms of processing, phosphorylation at Thr-269, Ser-338, Tyr-341, Thr-491 and Ser-494 results in its activation. Phosphorylation at Ser-29, Ser-43, Ser-289, Ser-296, Ser-301 and Ser-642 by MAPK1/ERK2 results in its inactivation. Phosphorylation at Ser-259 induces the interaction with YWHAZ and inactivates kinase activity. Dephosphorylation of Ser-259 by the SHOC2-MRAS-PP1c (SMP) complex consisting of SHOC2, GTP-bound M-Ras/MRAS and the catalytic subunit of protein phosphatase 1 (PPP1CA, PPP1CB or PPP1CC); this relieves inactivation and stimulates kinase activity. Phosphorylation at Ser-338 by PAK1 and PAK5 and Ser-339 by PAK1 is required for its mitochondrial localization. Phosphorylation at Ser-621 in response to growth factor treatment stabilizes the protein, possibly by preventing proteasomal degradation. Phosphorylation at Ser-289, Ser-296, Ser-301, Ser-338 and Ser-621 are somehow linked to the methylation potential of cells. Treatment of cells with HGF in the presence of the methylation inhibitor 5'-methylthioadenosine (MTA) results in increased phosphorylation at Ser-338 and Ser-621 and decreased phosphorylation at Ser-296, Ser-301 and Ser-338. Dephosphorylation at Ser-338 by PPP5C results in an activity decrease. Methylated at Arg-563 in response to EGF treatment. This modification leads to destabilization of the protein, possibly through proteasomal degradation. In terms of tissue distribution, in skeletal muscle, isoform 1 is more abundant than isoform 2.

The protein localises to the cytoplasm. The protein resides in the cell membrane. Its subcellular location is the mitochondrion. It localises to the nucleus. The catalysed reaction is L-seryl-[protein] + ATP = O-phospho-L-seryl-[protein] + ADP + H(+). The enzyme catalyses L-threonyl-[protein] + ATP = O-phospho-L-threonyl-[protein] + ADP + H(+). With respect to regulation, regulation is a highly complex process involving membrane recruitment, protein-protein interactions, dimerization, and phosphorylation/dephosphorylation events. Ras-GTP recruits RAF1 to the membrane, thereby promoting its activation. The inactive conformation of RAF1 is maintained by autoinhibitory interactions occurring between the N-terminal regulatory and the C-terminal catalytic domains and by the binding of a 14-3-3 protein that contacts two phosphorylation sites, Ser-259 and Ser-621. Upon mitogenic stimulation, Ras and PPP2R1A cooperate to release autoinhibition and the subsequent phosphorylation of activating sites: Ser-338, Tyr-341, Thr-491, and Ser-494, yields a fully active kinase. Through a negative feedback mechanism involving MAPK1/ERK2, RAF1 is phosphorylated on Ser-29, Ser-43, Ser-289, Ser-296, Ser-301 and Ser-642 by MAPK1/ERK2, which yields an inactive, desensitized kinase. The signaling-competent conformation of RAF1 is finally re-established by the coordinated action of PIN1, a prolyl isomerase that converts pSer and pThr residues from the cis to the trans conformation, which is preferentially recognized and dephosphorylated by PPP2R1A. Activated by homodimerization and heterodimerization (with BRAF). Also regulated through association with other proteins such as KSR2, CNKSR1/CNK1, PEBP1/RKIP, PHB/prohibitin and SPRY4. PEBP1/RKIP acts by dissociating RAF1 from its substrates MAP2K1/MEK1 and MAP2K2/MEK2. PHB/prohibitin facilitates the displacement of 14-3-3 from RAF1 by activated Ras, thereby promoting cell membrane localization and phosphorylation of RAF1 at the activating Ser-338. SPRY4 inhibits Ras-independent, but not Ras-dependent, activation of RAF1. CNKSR1/CNK1 regulates Src-mediated RAF1 activation. Serine/threonine-protein kinase that acts as a regulatory link between the membrane-associated Ras GTPases and the MAPK/ERK cascade, and this critical regulatory link functions as a switch determining cell fate decisions including proliferation, differentiation, apoptosis, survival and oncogenic transformation. RAF1 activation initiates a mitogen-activated protein kinase (MAPK) cascade that comprises a sequential phosphorylation of the dual-specific MAPK kinases (MAP2K1/MEK1 and MAP2K2/MEK2) and the extracellular signal-regulated kinases (MAPK3/ERK1 and MAPK1/ERK2). The phosphorylated form of RAF1 (on residues Ser-338 and Ser-339, by PAK1) phosphorylates BAD/Bcl2-antagonist of cell death at 'Ser-75'. Phosphorylates adenylyl cyclases: ADCY2, ADCY5 and ADCY6, resulting in their activation. Phosphorylates PPP1R12A resulting in inhibition of the phosphatase activity. Phosphorylates TNNT2/cardiac muscle troponin T. Can promote NF-kB activation and inhibit signal transducers involved in motility (ROCK2), apoptosis (MAP3K5/ASK1 and STK3/MST2), proliferation and angiogenesis (RB1). Can protect cells from apoptosis also by translocating to the mitochondria where it binds BCL2 and displaces BAD/Bcl2-antagonist of cell death. Regulates Rho signaling and migration, and is required for normal wound healing. Plays a role in the oncogenic transformation of epithelial cells via repression of the TJ protein, occludin (OCLN) by inducing the up-regulation of a transcriptional repressor SNAI2/SLUG, which induces down-regulation of OCLN. Restricts caspase activation in response to selected stimuli, notably Fas stimulation, pathogen-mediated macrophage apoptosis, and erythroid differentiation. This Homo sapiens (Human) protein is RAF proto-oncogene serine/threonine-protein kinase.